A 225-amino-acid chain; its full sequence is UPF0173 metal-dependent hydrolase Pisl_0803 (225 aa).

This sequence belongs to the UPF0173 family.

This is UPF0173 metal-dependent hydrolase Pisl_0803 from Pyrobaculum islandicum (strain DSM 4184 / JCM 9189 / GEO3).